Reading from the N-terminus, the 426-residue chain is MMDTAIATIRAREILDSRGRPTVEAEVELECGIVGLAQVPSGASTGSFEAHELRDGDPKRYGGKGVLSAVENIETRILSALVDLNALDQTVIDQCLLELDGSENKSNLGANAILAVSLATAKAAAEYLGQPLYRYLGGPLANVLPVPMMNVINGGAHAANNIDFQEFMIMPIGAPSFREGLRWGAEVFAALSKVLADKGLLTGVGDEGGFAPNLDSNQAALDILLQAIETAGYRPGTDVALALDVAANEFYEDGKYVFDNTSRTASELIRYYDQLVSTYPIISIEDGLQEEDWDNWALLTETLGSRIQLVGDDLFVTNPKRLQRGIDNGVANAILIKLNQIGSLTETLQTIDLATRKGYRAVISHRSGETEDTTIADLAVATRAGQIKTGSLCRSERVAKYNRLLRIEAELGDQAVYAPKVGLGPR.

Gln-165 provides a ligand contact to (2R)-2-phosphoglycerate. The active-site Proton donor is Glu-207. Asp-244, Glu-285, and Asp-312 together coordinate Mg(2+). (2R)-2-phosphoglycerate is bound by residues Lys-337, Arg-366, Ser-367, and Lys-388. The active-site Proton acceptor is the Lys-337.

Belongs to the enolase family. Mg(2+) is required as a cofactor.

The protein localises to the cytoplasm. Its subcellular location is the secreted. It localises to the cell surface. The enzyme catalyses (2R)-2-phosphoglycerate = phosphoenolpyruvate + H2O. Its pathway is carbohydrate degradation; glycolysis; pyruvate from D-glyceraldehyde 3-phosphate: step 4/5. Functionally, catalyzes the reversible conversion of 2-phosphoglycerate (2-PG) into phosphoenolpyruvate (PEP). It is essential for the degradation of carbohydrates via glycolysis. The protein is Enolase of Thermosynechococcus vestitus (strain NIES-2133 / IAM M-273 / BP-1).